We begin with the raw amino-acid sequence, 669 residues long: DNA ligase (669 aa).

NAD(+) is bound by residues 33-37, 82-83, and Glu-114; these read DAEYD and SL. Catalysis depends on Lys-116, which acts as the N6-AMP-lysine intermediate. Arg-137, Glu-174, Lys-291, and Lys-315 together coordinate NAD(+). Positions 409, 412, 427, and 433 each coordinate Zn(2+). The BRCT domain occupies 593-669; that stretch reads EIPQPLAGKV…QTEQDLLALL (77 aa).

It belongs to the NAD-dependent DNA ligase family. LigA subfamily. Mg(2+) serves as cofactor. The cofactor is Mn(2+).

It carries out the reaction NAD(+) + (deoxyribonucleotide)n-3'-hydroxyl + 5'-phospho-(deoxyribonucleotide)m = (deoxyribonucleotide)n+m + AMP + beta-nicotinamide D-nucleotide.. In terms of biological role, DNA ligase that catalyzes the formation of phosphodiester linkages between 5'-phosphoryl and 3'-hydroxyl groups in double-stranded DNA using NAD as a coenzyme and as the energy source for the reaction. It is essential for DNA replication and repair of damaged DNA. The protein is DNA ligase of Vibrio vulnificus (strain CMCP6).